Reading from the N-terminus, the 172-residue chain is MMKLKSNQTRTYDGDGYKKRAACLCFRSESEEEVLLVSSSRHPDRWIVPGGGMEPEEEPSVAAVREVCEEAGVKGTLGRLVGIFENQERKHRTYVYVLIVTEVLEDWEDSVNIGRKREWFKIEDAIKVLQYHKPVQASYFETLRQGYSANNGTPVVATTYSVSAQSSMSGIR.

Met-1 is modified (N-acetylmethionine). Substrate contacts are provided by residues Arg-10, 18–20, and 39–41; these read KKR and SSR. The Nudix hydrolase domain maps to 17–142; sequence YKKRAACLCF…KPVQASYFET (126 aa). Mg(2+)-binding residues include Gly-50 and Glu-66. Residues 51 to 72 carry the Nudix box motif; that stretch reads GGMEPEEEPSVAAVREVCEEAG. Glu-69 serves as the catalytic Proton acceptor. Glu-70 is a Mg(2+) binding site. Substrate-binding positions include 89 to 91, Arg-115, and Lys-133; that span reads RKH.

This sequence belongs to the Nudix hydrolase family. DIPP subfamily. In terms of assembly, monomer. Requires Mg(2+) as cofactor. It depends on Mn(2+) as a cofactor. Zn(2+) is required as a cofactor. Widely expressed. Expressed at higher level in brain, heart, pancreas and liver. Also expressed in placenta, lung and kidney.

The protein resides in the cytoplasm. It is found in the nucleus. The enzyme catalyses diphospho-myo-inositol polyphosphate + H2O = myo-inositol polyphosphate + phosphate.. It catalyses the reaction 5-diphospho-1D-myo-inositol 1,2,3,4,6-pentakisphosphate + H2O = 1D-myo-inositol hexakisphosphate + phosphate + H(+). The catalysed reaction is 3,5-bis(diphospho)-1D-myo-inositol 1,2,4,6-tetrakisphosphate + H2O = 3-diphospho-1D-myo-inositol 1,2,4,5,6-pentakisphosphate + phosphate + 2 H(+). It carries out the reaction [phosphate](n+1) + n H2O = (n+1) phosphate + n H(+). The enzyme catalyses P(1),P(5)-bis(5'-adenosyl) pentaphosphate + H2O = ADP + ATP + 2 H(+). It catalyses the reaction P(1),P(6)-bis(5'-adenosyl) hexaphosphate + H2O = 2 ATP + 2 H(+). The catalysed reaction is P(1),P(4)-bis(5'-adenosyl) tetraphosphate + H2O = AMP + ATP + 2 H(+). It carries out the reaction a 5'-end (N(7)-methyl 5'-triphosphoguanosine)-ribonucleoside in mRNA + H2O = N(7)-methyl-GMP + a 5'-end diphospho-ribonucleoside in mRNA + 2 H(+). The enzyme catalyses a 5'-end (N(7)-methyl 5'-triphosphoguanosine)-ribonucleoside in mRNA + H2O = N(7)-methyl-GDP + a 5'-end phospho-ribonucleoside in mRNA + 2 H(+). With respect to regulation, endopolyphospahatase activity is inhibited by NaF, NaPPi, beta-glycerol phosphate and heparin. 5-diphosphoinositol pentakisphosphate (5-InsP7) inhibits its mRNA decapping activity. Its function is as follows. Cleaves a beta-phosphate from the diphosphate groups in PP-InsP5 (diphosphoinositol pentakisphosphate) and [PP]2-InsP4 (bisdiphosphoinositol tetrakisphosphate), suggesting that it may play a role in signal transduction. InsP6 (inositol hexakisphosphate) is not a substrate. Acts as a negative regulator of the ERK1/2 pathway. Also able to catalyze the hydrolysis of dinucleoside oligophosphates, with diadenosine 5',5'''-P1,P6-hexaphosphate (Ap6A) and diadenosine 5',5'''- P1,P5-pentaphosphate (Ap5A) being the preferred substrates. The major reaction products are ADP and p4a from Ap6A and ADP and ATP from Ap5A. Also able to hydrolyze 5-phosphoribose 1-diphosphate. Acts as a decapping enzyme that modulates the stability of a subset of mRNAs implicated in cell motility. Hydrolyzes monomethylated capped RNA after both the alpha- and beta-phosphates generating m7GMP + ppRNA and m7GDP + pRNA. Can hydrolyze unmethylated capped RNAs. Divalent cations zinc, magnesium and manganese determine its substrate specificity. Exhibits diphosphoinositol polyphosphate phosphohydrolase in the presence of magnesium ions, diadenosine hexaphosphate hydrolase activity in the presence of manganese ions and endopolyphosphatase activity in the presence of zinc ions. Plays an important role in limiting DNA damage and maintaining cell survival upon oxidative stress via its endopolyphosphatase activity. The sequence is that of Diphosphoinositol polyphosphate phosphohydrolase 1 from Homo sapiens (Human).